Here is an 802-residue protein sequence, read N- to C-terminus: Sucrose synthase 1 (802 aa).

The segment at Met-272–Thr-749 is GT-B glycosyltransferase.

It belongs to the glycosyltransferase 1 family. Plant sucrose synthase subfamily.

It catalyses the reaction an NDP-alpha-D-glucose + D-fructose = a ribonucleoside 5'-diphosphate + sucrose + H(+). In terms of biological role, sucrose-cleaving enzyme that provides UDP-glucose and fructose for various metabolic pathways. Most active in the sink tissues where it is responsible for the breakdown of the arriving sucrose. The protein is Sucrose synthase 1 (SH-1) of Zea mays (Maize).